Consider the following 107-residue polypeptide: MEIKPNEKIRVRLESFNHELLNTSCQKIMEITQNNNVDNVGVVSLPTDKRIYCVLRSPHVNKDSREHFEIRTHKRILEISYDSSVNIFDLLVKSDLPPGVLYRICLS.

It belongs to the universal ribosomal protein uS10 family. As to quaternary structure, part of the 30S ribosomal subunit.

It is found in the plastid. Its subcellular location is the chloroplast. Functionally, involved in the binding of tRNA to the ribosomes. This chain is Small ribosomal subunit protein uS10c, found in Thalassiosira pseudonana (Marine diatom).